The following is a 125-amino-acid chain: Small ribosomal subunit protein uS12 (125 aa).

A disordered region spans residues 1–28 (MPTINQLVRKGREKVKKKSKAPALEGNP). Basic residues predominate over residues 9–20 (RKGREKVKKKSK). Asp89 carries the post-translational modification 3-methylthioaspartic acid. The segment at 104-125 (AAGVKDRKQSRSKYGTKRPKEK) is disordered. Basic residues predominate over residues 113 to 125 (SRSKYGTKRPKEK).

Belongs to the universal ribosomal protein uS12 family. As to quaternary structure, part of the 30S ribosomal subunit. Contacts proteins S8 and S17. May interact with IF1 in the 30S initiation complex.

With S4 and S5 plays an important role in translational accuracy. Functionally, interacts with and stabilizes bases of the 16S rRNA that are involved in tRNA selection in the A site and with the mRNA backbone. Located at the interface of the 30S and 50S subunits, it traverses the body of the 30S subunit contacting proteins on the other side and probably holding the rRNA structure together. The combined cluster of proteins S8, S12 and S17 appears to hold together the shoulder and platform of the 30S subunit. This Persephonella marina (strain DSM 14350 / EX-H1) protein is Small ribosomal subunit protein uS12.